The sequence spans 866 residues: MSSQDPPPATSTQKKQSESLVNLLAEASRFYRKAYNELFSGLITEWEPESSTNIPDYMLFGWHLFLNLRLRSPELFKDLVSCIHGLVAVLAILLVHVPAKFRTFTIEGSSHLIKQTEKGVDLIASLCHNYHTSEECLKEMMDKSHKAIEEVFSMKALSASECKTENLDKIDTDRLMYFKGLIDMECFQSNLEKIEKLCNSNNCEAELDFKLILTNNDYIPCAENLSRDSTNLGCSKCAFETLASPRKTIKNMLTVPSSPLSPTNGCSVKIVQMTPITSAMTTAKWLREVISSLPEKPSSKLQQLMSSCDRDLTYAVTERVSIVLEAIFPTKSSADRGGSLGLNCANAFDTLWADARKMEASKLYYRVLEAICRAELQNSNVNNLTPLLSNERFHRCLIACSADVVLATHKTVIMMFPAVLESAGLTSFDLSKIIENFVRHEETLPRELKRHLNSLEEQILESMAWEKGSSLYNSLIVARPSVASEINRFGLLAESMPSLDDLVARQNIHIEGLPATPSKKRAAGRDDNADPRSPKRPCNESRSPVVEHNLQTPPPKQCHMVLTSLKAKCHPLQSTFASPTVSNPVGGNEKCADVTIQIFFSKILKLAAIRIRNLCERIQYMEQTERVYNVFKQILDQQTTLFFNRHIDQLILCCLYGVAKVCQLELSFREILNNYKKEAQCKPEVFLSIYIGSRNHNGVLISRHVDIITFYNEVFVPAAKPFLVSLISSGTRPEDKKNASGQVPGSPKLSPFPNLPDMSPKKVSASHNVYVSPLRQTKMDLLLSPSSRSFYACIGEGTHAYQSPSKDLAAINSRLNYNGRRVNSRLNFDMVSDSVVAGSLGQPNGGSTSLDPAAAFSPLSKRKPDT.

The interval 274-475 (TPITSAMTTA…EKGSSLYNSL (202 aa)) is domain A. The tract at residues 274 to 721 (TPITSAMTTA…NEVFVPAAKP (448 aa)) is pocket. The segment at 476–593 (IVARPSVASE…PVGGNEKCAD (118 aa)) is spacer. The disordered stretch occupies residues 513–551 (LPATPSKKRAAGRDDNADPRSPKRPCNESRSPVVEHNLQ). The segment covering 523–539 (AGRDDNADPRSPKRPCN) has biased composition (basic and acidic residues). The segment at 594 to 721 (VTIQIFFSKI…NEVFVPAAKP (128 aa)) is domain B. 2 disordered regions span residues 731 to 754 (TRPEDKKNASGQVPGSPKLSPFPN) and 839 to 866 (SLGQPNGGSTSLDPAAAFSPLSKRKPDT). The segment covering 841–850 (GQPNGGSTSL) has biased composition (polar residues).

It belongs to the retinoblastoma protein (RB) family. In terms of tissue distribution, ubiquitous.

The protein resides in the nucleus. In terms of biological role, regulator of biological processes that recruits a histone deacetylase to control gene transcription. May play a role in the entry into mitosis, negatively regulating the cell proliferation. Formation of stable complexes with geminiviridae replication-associated proteins may create a cellular environment which favors viral DNA replication. In Zea mays (Maize), this protein is Retinoblastoma-related protein 2 (RBR2).